The primary structure comprises 146 residues: Prolactin-inducible protein (146 aa).

The first 28 residues, 1-28 (MRLLQLLFRASPATLLLVLCLQLGANKA), serve as a signal peptide directing secretion. A Pyrrolidone carboxylic acid modification is found at Gln-29. Intrachain disulfides connect Cys-65-Cys-91 and Cys-89-Cys-123. A glycan (N-linked (GlcNAc...) asparagine) is linked at Asn-105.

Belongs to the PIP family. In terms of assembly, monomer. Interacts with AZGP1. As to expression, expressed in pathological conditions of the mammary gland and in several exocrine tissues, such as the lacrimal, salivary, and sweat glands.

It localises to the secreted. The protein is Prolactin-inducible protein (PIP) of Homo sapiens (Human).